A 192-amino-acid chain; its full sequence is Ion-translocating oxidoreductase complex subunit A (192 aa).

6 helical membrane-spanning segments follow: residues 5-25 (ILLLVGTVLVNNFVLVKFLGL), 39-59 (IGMGLATTFVLTLASVCAYLV), 67-87 (LGIEYLRTMSFILVIAVVVQF), 102-122 (LLGIFLPLITTNCAVLGVALL), 134-154 (IIYGFGAAVGFSLVLILFASM), and 171-191 (SIAMITAGLMSLAFMGFTGLV).

It belongs to the NqrDE/RnfAE family. In terms of assembly, the complex is composed of six subunits: RnfA, RnfB, RnfC, RnfD, RnfE and RnfG.

The protein localises to the cell inner membrane. Its function is as follows. Part of a membrane-bound complex that couples electron transfer with translocation of ions across the membrane. The chain is Ion-translocating oxidoreductase complex subunit A from Vibrio campbellii (strain ATCC BAA-1116).